The primary structure comprises 530 residues: Bifunctional purine biosynthesis protein PurH (530 aa).

In terms of domain architecture, MGS-like spans 1–148 (MNNARPIRRA…KNHKDVTIVV (148 aa)).

Belongs to the PurH family.

It carries out the reaction (6R)-10-formyltetrahydrofolate + 5-amino-1-(5-phospho-beta-D-ribosyl)imidazole-4-carboxamide = 5-formamido-1-(5-phospho-D-ribosyl)imidazole-4-carboxamide + (6S)-5,6,7,8-tetrahydrofolate. It catalyses the reaction IMP + H2O = 5-formamido-1-(5-phospho-D-ribosyl)imidazole-4-carboxamide. It participates in purine metabolism; IMP biosynthesis via de novo pathway; 5-formamido-1-(5-phospho-D-ribosyl)imidazole-4-carboxamide from 5-amino-1-(5-phospho-D-ribosyl)imidazole-4-carboxamide (10-formyl THF route): step 1/1. It functions in the pathway purine metabolism; IMP biosynthesis via de novo pathway; IMP from 5-formamido-1-(5-phospho-D-ribosyl)imidazole-4-carboxamide: step 1/1. In Vibrio atlanticus (strain LGP32) (Vibrio splendidus (strain Mel32)), this protein is Bifunctional purine biosynthesis protein PurH.